A 247-amino-acid polypeptide reads, in one-letter code: MAGHSKWSQIKRSKAVVDAKRGAVFTRLAREISVAARSGGDPNGNFQLRTAINKAKAARMPAANIERAIAKGSGQDQNGACQLEAIRYEGYGPGGVAVLIEALTDNRNRTAADLRLTFNKHGGKLGESGCVAYLFEQRSEVYLSAQSAQDGGKVSEDALLENLLELEADGYQLIDDGAVVYGPFQALEGLQAGLRDQGWIVEGWEHCWRPLTTISQADQKSEDQCLQLLEALDELDDVHHISSNLES.

It belongs to the TACO1 family.

It is found in the cytoplasm. In Prochlorococcus marinus (strain MIT 9313), this protein is Probable transcriptional regulatory protein PMT_1423.